The sequence spans 261 residues: Calbindin (261 aa).

A2 bears the N-acetylalanine mark. The segment at 2–7 is interaction with RANBP9; sequence AESHLQ. 5 consecutive EF-hand domains span residues 11–46, 53–88, 98–133, 142–177, and 186–221; these read ITAS…LQQA, ELSP…EENF, KSCE…LLEK, KLAE…QENF, and MCGK…LCEK. Residues D24, D26, S28, Y30, and E35 each contribute to the Ca(2+) site. D111, D113, S115, E122, D155, N157, D159, K161, E166, D199, D201, N203, Y205, and E210 together coordinate Ca(2+).

Belongs to the calbindin family. Interacts with RANBP9.

In terms of biological role, buffers cytosolic calcium. May stimulate a membrane Ca(2+)-ATPase and a 3',5'-cyclic nucleotide phosphodiesterase. The chain is Calbindin (CALB1) from Homo sapiens (Human).